The chain runs to 201 residues: Recombination protein RecR (201 aa).

The C4-type zinc finger occupies 57-72 (CSDCRTFTEQDVCAIC). One can recognise a Toprim domain in the interval 81–176 (GQICVVESPA…MASRIAHGVP (96 aa)).

Belongs to the RecR family.

In terms of biological role, may play a role in DNA repair. It seems to be involved in an RecBC-independent recombinational process of DNA repair. It may act with RecF and RecO. The sequence is that of Recombination protein RecR from Pectobacterium carotovorum subsp. carotovorum (strain PC1).